The sequence spans 254 residues: Putative epimerase LsrE (254 aa).

Residues 14-34 (VALLASYPLSVGILAGQWIAL) form a helical membrane-spanning segment. 3 residues coordinate a divalent metal cation: His-50, Asp-52, and His-81. The Proton acceptor role is filled by Asp-52. Substrate-binding positions include His-81, 166–169 (GYGS), 199–201 (DGS), and 221–222 (GS). Residue Asp-199 coordinates a divalent metal cation. Residue Asp-199 is the Proton donor of the active site.

It belongs to the ribulose-phosphate 3-epimerase family. A divalent metal cation is required as a cofactor.

The protein resides in the cell membrane. The chain is Putative epimerase LsrE (lsrE) from Salmonella paratyphi A (strain ATCC 9150 / SARB42).